The sequence spans 455 residues: Beta-1,4-mannosyltransferase bre-3 (455 aa).

It belongs to the glycosyltransferase 2 family. Endothelial cells.

It is found in the cytoplasm. It functions in the pathway protein modification; protein glycosylation. In terms of biological role, glycosyltransferase with a proposed role in glycosphingolipid biosynthesis. Involved in susceptibility to pore-forming crystal toxins in conjunction with bre-1, bre-2, bre-4 and bre-5. Involved in resistance to the nematotoxic C.cinerea galectin Cgl2. Has a role in determining brood size. This Caenorhabditis elegans protein is Beta-1,4-mannosyltransferase bre-3 (bre-3).